A 248-amino-acid chain; its full sequence is Triosephosphate isomerase B (248 aa).

Substrate contacts are provided by N11 and K13. Catalysis depends on H95, which acts as the Electrophile. The Proton acceptor role is filled by E165.

This sequence belongs to the triosephosphate isomerase family. Homodimer.

It is found in the cytoplasm. It catalyses the reaction dihydroxyacetone phosphate = methylglyoxal + phosphate. The enzyme catalyses D-glyceraldehyde 3-phosphate = dihydroxyacetone phosphate. It functions in the pathway carbohydrate degradation; glycolysis; D-glyceraldehyde 3-phosphate from glycerone phosphate: step 1/1. It participates in carbohydrate biosynthesis; gluconeogenesis. In terms of biological role, triosephosphate isomerase is an extremely efficient metabolic enzyme that catalyzes the interconversion between dihydroxyacetone phosphate (DHAP) and D-glyceraldehyde-3-phosphate (G3P) in glycolysis and gluconeogenesis. Its function is as follows. It is also responsible for the non-negligible production of methylglyoxal a reactive cytotoxic side-product that modifies and can alter proteins, DNA and lipids. The chain is Triosephosphate isomerase B (tpi1b) from Danio rerio (Zebrafish).